We begin with the raw amino-acid sequence, 300 residues long: Tyrosine recombinase XerC (300 aa).

The Core-binding (CB) domain occupies 2-87 (TSLSPLLEKF…SIKSFYKYLV (86 aa)). The Tyr recombinase domain maps to 108–294 (TLPKVLPVEE…TWEQLQQVYD (187 aa)). Residues R148, K172, H246, R249, and H272 contribute to the active site. Catalysis depends on Y281, which acts as the O-(3'-phospho-DNA)-tyrosine intermediate.

The protein belongs to the 'phage' integrase family. XerC subfamily. Forms a cyclic heterotetrameric complex composed of two molecules of XerC and two molecules of XerD.

The protein resides in the cytoplasm. Functionally, site-specific tyrosine recombinase, which acts by catalyzing the cutting and rejoining of the recombining DNA molecules. The XerC-XerD complex is essential to convert dimers of the bacterial chromosome into monomers to permit their segregation at cell division. It also contributes to the segregational stability of plasmids. The polypeptide is Tyrosine recombinase XerC (Myxococcus xanthus).